A 511-amino-acid chain; its full sequence is Bifunctional purine biosynthesis protein PurH (511 aa).

Residues 1-145 (MKKRALVSVS…KNHKFVSVIV (145 aa)) form the MGS-like domain.

It belongs to the PurH family.

It carries out the reaction (6R)-10-formyltetrahydrofolate + 5-amino-1-(5-phospho-beta-D-ribosyl)imidazole-4-carboxamide = 5-formamido-1-(5-phospho-D-ribosyl)imidazole-4-carboxamide + (6S)-5,6,7,8-tetrahydrofolate. The catalysed reaction is IMP + H2O = 5-formamido-1-(5-phospho-D-ribosyl)imidazole-4-carboxamide. Its pathway is purine metabolism; IMP biosynthesis via de novo pathway; 5-formamido-1-(5-phospho-D-ribosyl)imidazole-4-carboxamide from 5-amino-1-(5-phospho-D-ribosyl)imidazole-4-carboxamide (10-formyl THF route): step 1/1. It functions in the pathway purine metabolism; IMP biosynthesis via de novo pathway; IMP from 5-formamido-1-(5-phospho-D-ribosyl)imidazole-4-carboxamide: step 1/1. The chain is Bifunctional purine biosynthesis protein PurH from Bacillus cereus (strain ATCC 10987 / NRS 248).